The following is a 272-amino-acid chain: 2-dehydro-3-deoxyphosphooctonate aldolase (272 aa).

The protein belongs to the KdsA family.

The protein resides in the cytoplasm. It carries out the reaction D-arabinose 5-phosphate + phosphoenolpyruvate + H2O = 3-deoxy-alpha-D-manno-2-octulosonate-8-phosphate + phosphate. It participates in carbohydrate biosynthesis; 3-deoxy-D-manno-octulosonate biosynthesis; 3-deoxy-D-manno-octulosonate from D-ribulose 5-phosphate: step 2/3. Its pathway is bacterial outer membrane biogenesis; lipopolysaccharide biosynthesis. The protein is 2-dehydro-3-deoxyphosphooctonate aldolase of Geobacter metallireducens (strain ATCC 53774 / DSM 7210 / GS-15).